We begin with the raw amino-acid sequence, 241 residues long: DNA repair protein RecO (241 aa).

This sequence belongs to the RecO family.

Functionally, involved in DNA repair and RecF pathway recombination. This is DNA repair protein RecO from Azobacteroides pseudotrichonymphae genomovar. CFP2.